Consider the following 176-residue polypeptide: Large ribosomal subunit protein uL10 (176 aa).

This sequence belongs to the universal ribosomal protein uL10 family. As to quaternary structure, part of the ribosomal stalk of the 50S ribosomal subunit. The N-terminus interacts with L11 and the large rRNA to form the base of the stalk. The C-terminus forms an elongated spine to which L12 dimers bind in a sequential fashion forming a multimeric L10(L12)X complex.

Forms part of the ribosomal stalk, playing a central role in the interaction of the ribosome with GTP-bound translation factors. The chain is Large ribosomal subunit protein uL10 from Teredinibacter turnerae (strain ATCC 39867 / T7901).